The sequence spans 27 residues: Delta-conotoxin SuVIA (27 aa).

Cystine bridges form between C1-C17, C8-C21, and C16-C25.

Belongs to the conotoxin O1 superfamily. Expressed by the venom duct, in the proximal part (indicative of a defensive role).

It is found in the secreted. Functionally, this toxin activates voltage-gated sodium channels (Nav1.3/SCN3A (EC(50)=3.98 nM), Nav1.4/SCN4A (EC(50)=4.99 nM), Nav1.6/SCN8A (EC(50)=1.27 nM) and Nav1.7/SCN9A (EC(50)=2.42 nM)). It shifts the voltage-dependence of activation to more hyperpolarized potentials but has only little effect on channel inactivation. In vivo, it induces nocifensive or pain-like behaviors in mice when injected intraplantarly. This is coherent with the specific defensive role deduced from its proximal position in the venom gland. The chain is Delta-conotoxin SuVIA from Conus suturatus (Sutured cone).